A 466-amino-acid chain; its full sequence is Vimentin (466 aa).

Positions 1–13 are enriched in low complexity; the sequence is MSTRSVSSSSYRR. The tract at residues 1-32 is disordered; sequence MSTRSVSSSSYRRMFGGPGTGSRPSSTRSYVT. Ser-2 carries the post-translational modification N-acetylserine. The tract at residues 2–95 is head; it reads STRSVSSSSY…FSLADAINTE (94 aa). Phosphoserine is present on residues Ser-5, Ser-7, Ser-8, Ser-9, and Ser-10. A glycan (O-linked (GlcNAc) serine; alternate) is linked at Ser-7. Residue Thr-20 is modified to Phosphothreonine. Positions 21-32 are enriched in low complexity; that stretch reads GSRPSSTRSYVT. 2 positions are modified to phosphoserine: Ser-25 and Ser-26. Residue Thr-33 is glycosylated (O-linked (GlcNAc) threonine). Phosphoserine is present on residues Ser-34, Ser-39, Ser-42, Ser-47, Ser-49, and Ser-51. The O-linked (GlcNAc) serine; alternate glycan is linked to Ser-34. Tyr-53 is modified (phosphotyrosine). Residues Ser-55 and Ser-56 each carry the phosphoserine modification. Tyr-61 is modified (phosphotyrosine). Phosphoserine occurs at positions 66, 72, 73, 83, and 87. Residues 96-131 are coil 1A; it reads FKNTRTNEKVELQELNDRFANYIDKVRFLEQQNKIL. A coiled-coil region spans residues 96–131; it reads FKNTRTNEKVELQELNDRFANYIDKVRFLEQQNKIL. Positions 103-411 constitute an IF rod domain; sequence EKVELQELND…KLLEGEESRI (309 aa). A Glycyl lysine isopeptide (Lys-Gly) (interchain with G-Cter in SUMO2) cross-link involves residue Lys-104. A Phosphotyrosine modification is found at Tyr-117. 3 positions are modified to N6-acetyllysine; alternate: Lys-120, Lys-129, and Lys-139. Residues Lys-120 and Lys-129 each carry the N6-succinyllysine; alternate modification. Glycyl lysine isopeptide (Lys-Gly) (interchain with G-Cter in SUMO2); alternate cross-links involve residues Lys-120, Lys-129, and Lys-139. The interval 132-153 is linker 1; sequence LAELEQLKGQGKSRLGDLYEEE. Ser-144 bears the Phosphoserine mark. Residues 154–245 adopt a coiled-coil conformation; sequence MRELRRQVDQ…KLHDEEIQEL (92 aa). The coil 1B stretch occupies residues 154–245; that stretch reads MRELRRQVDQ…KLHDEEIQEL (92 aa). Residue Lys-168 is modified to N6-acetyllysine. An N6-acetyllysine; alternate modification is found at Lys-188. Lys-188 bears the N6-succinyllysine; alternate mark. At Ser-214 the chain carries Phosphoserine. Lys-223 carries the N6-acetyllysine; alternate modification. A Glycyl lysine isopeptide (Lys-Gly) (interchain with G-Cter in SUMO2); alternate cross-link involves residue Lys-223. Ser-226 carries the phosphoserine modification. Lys-235 is modified (N6-acetyllysine). Residues 246–268 are linker 12; that stretch reads QAQIQDQHVQIDMDVSKPDLTAA. Residue Lys-262 forms a Glycyl lysine isopeptide (Lys-Gly) (interchain with G-Cter in SUMO2) linkage. The interval 269-407 is coil 2; it reads LRDVRQQYES…ATYRKLLEGE (139 aa). Lys-294 bears the N6-acetyllysine; alternate mark. The residue at position 294 (Lys-294) is an N6-succinyllysine; alternate. A Glycyl lysine isopeptide (Lys-Gly) (interchain with G-Cter in SUMO2); alternate cross-link involves residue Lys-294. Ser-299 is subject to Phosphoserine. Positions 303–407 form a coiled coil; the sequence is NRNNDALRQA…ATYRKLLEGE (105 aa). Lys-313 is covalently cross-linked (Glycyl lysine isopeptide (Lys-Gly) (interchain with G-Cter in SUMO2)). Ser-325 is subject to Phosphoserine. Residues 326 to 329 carry the [IL]-x-C-x-x-[DE] motif motif; sequence LTCE. Lys-373 carries the N6-acetyllysine; alternate modification. Residue Lys-373 forms a Glycyl lysine isopeptide (Lys-Gly) (interchain with G-Cter in SUMO2); alternate linkage. The tail stretch occupies residues 408-466; the sequence is ESRIALPLPNFSSLNLRETNLDSLPLVDTHSKRTLLIKTVETRDGQVINETSQHHDDLE. A phosphoserine mark is found at Ser-409, Ser-419, and Ser-420. A Phosphothreonine modification is found at Thr-426. Residue Ser-430 is modified to Phosphoserine. Thr-436 is subject to Phosphothreonine. Ser-438 is subject to Phosphoserine. Lys-439 participates in a covalent cross-link: Glycyl lysine isopeptide (Lys-Gly) (interchain with G-Cter in SUMO2). Lys-445 carries the N6-acetyllysine; alternate modification. Lys-445 bears the N6-succinyllysine; alternate mark. Lys-445 participates in a covalent cross-link: Glycyl lysine isopeptide (Lys-Gly) (interchain with G-Cter in SUMO2); alternate. Lys-445 is covalently cross-linked (Glycyl lysine isopeptide (Lys-Gly) (interchain with G-Cter in SUMO1); alternate). A phosphothreonine mark is found at Thr-446 and Thr-458. Residue Ser-459 is modified to Phosphoserine.

The protein belongs to the intermediate filament family. As to quaternary structure, homomer assembled from elementary dimers. Identified in complexes that contain VIM, EZR, AHNAK, BFSP1, BFSP2, ANK2, PLEC, PRX and spectrin. Interacts with BCAS3. Interacts with LGSN. Interacts with SYNM. Interacts (via rod region) with PLEC (via CH 1 domain). Interacts with STK33. Interacts with LARP6. Interacts with RAB8B. Interacts with TOR1A; the interaction associates TOR1A with the cytoskeleton. Interacts with TOR1AIP1. Interacts with TOR1AIP1. Interacts with DIAPH1. Interacts with EPPK1; interaction is dependent of higher-order structure of intermediate filament. Interacts with the non-receptor tyrosine kinase SRMS; the interaction leads to phosphorylation of VIM. Interacts with NOD2. Interacts (via head region) with CORO1C. Interacts with HDGF. Interacts with PRKCE (via phorbol-ester/DAG-type 2 domain). Interacts with BFSP2. Interacts with PPL. Interacts with PKP1 and PKP2. Interacts with SCRIB (via PDZ domains); the interaction protects SCRIB from proteasomal degradation and facilitates SCRIB localization to intermediate filaments, the interaction is reduced by cell contact inhibition. Filament disassembly during mitosis is promoted by phosphorylation at Ser-55 as well as by nestin. One of the most prominent phosphoproteins in various cells of mesenchymal origin. Phosphorylation is enhanced during cell division, at which time vimentin filaments are significantly reorganized. Phosphorylation by PKN1 inhibits the formation of filaments. Phosphorylated at Ser-56 by CDK5 during neutrophil secretion in the cytoplasm. Phosphorylated by STK33. Phosphorylated on tyrosine residues by SRMS. In terms of processing, O-glycosylated during cytokinesis at sites identical or close to phosphorylation sites, this interferes with the phosphorylation status. Post-translationally, S-nitrosylation is induced by interferon-gamma and oxidatively-modified low-densitity lipoprotein (LDL(ox)) possibly implicating the iNOS-S100A8/9 transnitrosylase complex.

Its subcellular location is the cytoplasm. It localises to the cytoskeleton. The protein resides in the nucleus matrix. The protein localises to the cell membrane. Its function is as follows. Vimentins are class-III intermediate filaments found in various non-epithelial cells, especially mesenchymal cells. Vimentin is attached to the nucleus, endoplasmic reticulum, and mitochondria, either laterally or terminally. Plays a role in cell directional movement, orientation, cell sheet organization and Golgi complex polarization at the cell migration front. Protects SCRIB from proteasomal degradation and facilitates its localization to intermediate filaments in a cell contact-mediated manner. Functionally, involved with LARP6 in the stabilization of type I collagen mRNAs for CO1A1 and CO1A2. In Canis lupus familiaris (Dog), this protein is Vimentin (VIM).